A 204-amino-acid polypeptide reads, in one-letter code: Large ribosomal subunit protein bL25 (204 aa).

Residue Ser123 is modified to Phosphoserine.

It belongs to the bacterial ribosomal protein bL25 family. CTC subfamily. In terms of assembly, part of the 50S ribosomal subunit; part of the 5S rRNA/L5/L18/L25 subcomplex. Contacts the 5S rRNA. Binds to the 5S rRNA independently of L5 and L18.

Functionally, this is one of the proteins that binds to the 5S RNA in the ribosome where it forms part of the central protuberance. This Pseudomonas aeruginosa (strain UCBPP-PA14) protein is Large ribosomal subunit protein bL25.